A 156-amino-acid chain; its full sequence is Small ribosomal subunit protein uS7 (156 aa).

The protein belongs to the universal ribosomal protein uS7 family. Part of the 30S ribosomal subunit. Contacts proteins S9 and S11.

Functionally, one of the primary rRNA binding proteins, it binds directly to 16S rRNA where it nucleates assembly of the head domain of the 30S subunit. Is located at the subunit interface close to the decoding center, probably blocks exit of the E-site tRNA. This chain is Small ribosomal subunit protein uS7, found in Aeromonas hydrophila subsp. hydrophila (strain ATCC 7966 / DSM 30187 / BCRC 13018 / CCUG 14551 / JCM 1027 / KCTC 2358 / NCIMB 9240 / NCTC 8049).